The sequence spans 686 residues: L-type lectin-domain containing receptor kinase VII.1 (686 aa).

The signal sequence occupies residues 1–20 (MKALLFLLTLFLILPNPISA). The tract at residues 21 to 256 (IDFIFNGFND…SHKILAWSFS (236 aa)) is legume-lectin like. At 21-286 (IDFIFNGFND…PKDSIVKAKW (266 aa)) the chain is on the extracellular side. Residues N29, N34, N52, N64, N111, N123, N168, N203, N224, and N259 are each glycosylated (N-linked (GlcNAc...) asparagine). A helical membrane pass occupies residues 287-307 (FVFVLVLICFLVVALVGLVLF). The Cytoplasmic segment spans residues 308 to 686 (AVVRKRLERA…SWNSSILEGR (379 aa)). Residues 347-628 (FDEKNVIGIG…VFEGDKAEIF (282 aa)) enclose the Protein kinase domain. Residues 353-361 (IGIGGNGKV) and K376 each bind ATP. D475 functions as the Proton acceptor in the catalytic mechanism.

In the C-terminal section; belongs to the protein kinase superfamily. Ser/Thr protein kinase family. The protein in the N-terminal section; belongs to the leguminous lectin family.

It localises to the cell membrane. The enzyme catalyses L-seryl-[protein] + ATP = O-phospho-L-seryl-[protein] + ADP + H(+). The catalysed reaction is L-threonyl-[protein] + ATP = O-phospho-L-threonyl-[protein] + ADP + H(+). This chain is L-type lectin-domain containing receptor kinase VII.1 (LECRK71), found in Arabidopsis thaliana (Mouse-ear cress).